A 513-amino-acid polypeptide reads, in one-letter code: Maturase K (513 aa).

It belongs to the intron maturase 2 family. MatK subfamily.

The protein localises to the plastid. The protein resides in the chloroplast. Functionally, usually encoded in the trnK tRNA gene intron. Probably assists in splicing its own and other chloroplast group II introns. This chain is Maturase K, found in Pinus parviflora (Japanese white pine).